A 243-amino-acid polypeptide reads, in one-letter code: uncharacterized protein (243 aa).

The region spanning 2–240 is the GP-PDE domain; sequence TKIFAHRGAS…DFPEKASALL (239 aa).

This is an uncharacterized protein from Bacillus subtilis (strain 168).